Here is a 210-residue protein sequence, read N- to C-terminus: MDLHNIREDYSKRELSEADCADNPIEQFERWLDEAVRAQVNEPTAVNVAAVDGRGRPNSRMVLLKEVNSEGFVFFTNYHSRKGRSLDAHPFAAMTFFWPELERQVRVEGRVERLAEKLSDEYFESRPYQSRLGAWASAQSEVIPNKAVLVAKAAAVGLKHPLHVPRPPHWGGYIVIPDLLEFWQGRPSRLHDRIQYRLLDGGWIRERLSP.

Substrate is bound by residues arginine 7–tyrosine 10 and lysine 65. Residues arginine 60–lysine 65, phenylalanine 75–threonine 76, arginine 81, lysine 82, and glutamine 104 each bind FMN. Residues tyrosine 122, arginine 126, and serine 130 each coordinate substrate. Residues glutamine 139–serine 140 and tryptophan 183 each bind FMN. Arginine 189–histidine 191 serves as a coordination point for substrate. Arginine 193 contributes to the FMN binding site.

It belongs to the pyridoxamine 5'-phosphate oxidase family. In terms of assembly, homodimer. It depends on FMN as a cofactor.

It carries out the reaction pyridoxamine 5'-phosphate + O2 + H2O = pyridoxal 5'-phosphate + H2O2 + NH4(+). The catalysed reaction is pyridoxine 5'-phosphate + O2 = pyridoxal 5'-phosphate + H2O2. Its pathway is cofactor metabolism; pyridoxal 5'-phosphate salvage; pyridoxal 5'-phosphate from pyridoxamine 5'-phosphate: step 1/1. The protein operates within cofactor metabolism; pyridoxal 5'-phosphate salvage; pyridoxal 5'-phosphate from pyridoxine 5'-phosphate: step 1/1. In terms of biological role, catalyzes the oxidation of either pyridoxine 5'-phosphate (PNP) or pyridoxamine 5'-phosphate (PMP) into pyridoxal 5'-phosphate (PLP). This Neisseria meningitidis serogroup B (strain ATCC BAA-335 / MC58) protein is Pyridoxine/pyridoxamine 5'-phosphate oxidase.